We begin with the raw amino-acid sequence, 132 residues long: MTMTDPIADMLTRIRNGNMAKHETIDIPASNMKKEIANILLEEGFIKGFDVIEDGKQGIIRMQLKYGKNKEKVITGIKKISKPGLRVYAKKDEIPRVLGGLGIAIISTSRGIITDKVARKEGVGGEVIAYIW.

This sequence belongs to the universal ribosomal protein uS8 family. As to quaternary structure, part of the 30S ribosomal subunit. Contacts proteins S5 and S12.

One of the primary rRNA binding proteins, it binds directly to 16S rRNA central domain where it helps coordinate assembly of the platform of the 30S subunit. The protein is Small ribosomal subunit protein uS8 of Alkaliphilus oremlandii (strain OhILAs) (Clostridium oremlandii (strain OhILAs)).